The primary structure comprises 367 residues: Pyrimidine monooxygenase RutA (367 aa).

Residues 50 to 51 (IK), Asn-116, Glu-125, 141 to 142 (RY), and Ser-191 each bind FMN.

Belongs to the NtaA/SnaA/DszA monooxygenase family. RutA subfamily.

It catalyses the reaction uracil + FMNH2 + NADH + O2 = (Z)-3-ureidoacrylate + FMN + NAD(+) + H2O + H(+). The enzyme catalyses thymine + FMNH2 + NADH + O2 = (Z)-2-methylureidoacrylate + FMN + NAD(+) + H2O + H(+). Its function is as follows. Catalyzes the pyrimidine ring opening between N-3 and C-4 by an unusual flavin hydroperoxide-catalyzed mechanism, adding oxygen atoms in the process to yield ureidoacrylate peracid, that immediately reacts with FMN forming ureidoacrylate and FMN-N(5)-oxide. The FMN-N(5)-oxide reacts spontaneously with NADH to produce FMN. Requires the flavin reductase RutF to regenerate FMN in vivo. This is Pyrimidine monooxygenase RutA from Allorhizobium ampelinum (strain ATCC BAA-846 / DSM 112012 / S4) (Agrobacterium vitis (strain S4)).